The following is a 1092-amino-acid chain: Rho GTPase-activating protein 7 (1092 aa).

An SAM domain is found at 11–78 (LTQIEAKEAC…LNKCAVMKLE (68 aa)). Serine 86, serine 89, and serine 129 each carry phosphoserine. 4 disordered regions span residues 121-179 (PKQD…DATT), 297-330 (RSVSNSTQTSSSSSQSETSSAVSTPSPVTRTRSL), 409-434 (GPGHLSLRRENSHDSPKELKRRNSSS), and 492-553 (SDEG…SGVG). Positions 130-143 (PDNSRLQSATSHES) are enriched in polar residues. Composition is skewed to low complexity over residues 154-174 (VASVRSLSSTSSSVPTHAAHS) and 299-325 (VSNSTQTSSSSSQSETSSAVSTPSPVT). Residues 275–448 (QLNCVEISAL…RLSIYDNVPG (174 aa)) form a focal adhesion-targeting (FAT) region. Phosphoserine is present on serine 322. A compositionally biased stretch (basic and acidic residues) spans 415 to 426 (LRRENSHDSPKE). Polar residues predominate over residues 500-512 (ALDSVSPCPSSPK). Residues 514–526 (IHLDVDHDRRTPS) show a composition bias toward basic and acidic residues. Positions 527-536 (DLDSTGNSLN) are enriched in polar residues. A polybasic cluster (PBR) region spans residues 615-637 (KHGFSWAVPKFMKRIKVPDYKDR). Positions 642–848 (VPLTVNVQRS…HMIAECKKLF (207 aa)) constitute a Rho-GAP domain. The region spanning 878–1085 (NSDQPADYRH…RDSFSNQNTE (208 aa)) is the START domain.

As to quaternary structure, interacts with EF1A1, facilitates EF1A1 distribution to the membrane periphery and ruffles upon growth factor stimulation and suppresses cell migration. Interacts with tensin TNS1 (via N-terminus); the interaction is decreased by phosphorylation of TNS1. Interacts with TNS3 and PTEN; in resting cells, interacts with TNS3 (via C2 tensin-type domain) but, following growth factor stimulation, TNS3 and PTEN are phosphorylated which leads to weakened interaction with TNS3 and enhanced interaction with PTEN. Interacts (via C-terminus) with tensin TNS4 (via SH2 domain); the interaction is independent of tyrosine phosphorylation of DLC1. Widely expressed with the highest levels in heart, liver and lung.

The protein localises to the cytoplasm. Its subcellular location is the cell junction. The protein resides in the focal adhesion. It is found in the membrane. Functions as a GTPase-activating protein for the small GTPases RHOA, RHOB, RHOC and CDC42, terminating their downstream signaling. This induces morphological changes and detachment through cytoskeletal reorganization, playing a critical role in biological processes such as cell migration and proliferation. Also functions in vivo as an activator of the phospholipase PLCD1. Active DLC1 increases cell migration velocity but reduces directionality. Required for growth factor-induced epithelial cell migration; in resting cells, interacts with TNS3 while PTEN interacts with the p85 regulatory subunit of the PI3K kinase complex but growth factor stimulation induces phosphorylation of TNS3 and PTEN, causing them to change their binding preference so that PTEN interacts with DLC1 and TNS3 interacts with p85. The PTEN-DLC1 complex translocates to the posterior of migrating cells to activate RHOA while the TNS3-p85 complex translocates to the leading edge of migrating cells to promote RAC1 activation. This Mus musculus (Mouse) protein is Rho GTPase-activating protein 7 (Dlc1).